A 527-amino-acid polypeptide reads, in one-letter code: Type-2 serine--tRNA ligase (527 aa).

Ala-317 lines the L-serine pocket. Cys-319 is a Zn(2+) binding site. Arg-349 is a binding site for L-serine. ATP-binding positions include 349–351 and 360–361; these read RWE and RV. An L-serine-binding site is contributed by 366–368; that stretch reads RIE. Zn(2+)-binding residues include Glu-368 and Cys-478. Arg-485 serves as a coordination point for ATP.

It belongs to the class-II aminoacyl-tRNA synthetase family. Type-2 seryl-tRNA synthetase subfamily. As to quaternary structure, homodimer. Zn(2+) is required as a cofactor.

The protein resides in the cytoplasm. It catalyses the reaction tRNA(Ser) + L-serine + ATP = L-seryl-tRNA(Ser) + AMP + diphosphate + H(+). The catalysed reaction is tRNA(Sec) + L-serine + ATP = L-seryl-tRNA(Sec) + AMP + diphosphate + H(+). Its pathway is aminoacyl-tRNA biosynthesis; selenocysteinyl-tRNA(Sec) biosynthesis; L-seryl-tRNA(Sec) from L-serine and tRNA(Sec): step 1/1. Functionally, catalyzes the attachment of serine to tRNA(Ser). Is also able to aminoacylate tRNA(Sec) with serine, to form the misacylated tRNA L-seryl-tRNA(Sec), which will be further converted into selenocysteinyl-tRNA(Sec). In Methanopyrus kandleri (strain AV19 / DSM 6324 / JCM 9639 / NBRC 100938), this protein is Type-2 serine--tRNA ligase.